The chain runs to 157 residues: Peptide methionine sulfoxide reductase MsrA (157 aa).

The active site involves Cys-13.

This sequence belongs to the MsrA Met sulfoxide reductase family.

It carries out the reaction L-methionyl-[protein] + [thioredoxin]-disulfide + H2O = L-methionyl-(S)-S-oxide-[protein] + [thioredoxin]-dithiol. It catalyses the reaction [thioredoxin]-disulfide + L-methionine + H2O = L-methionine (S)-S-oxide + [thioredoxin]-dithiol. In terms of biological role, has an important function as a repair enzyme for proteins that have been inactivated by oxidation. Catalyzes the reversible oxidation-reduction of methionine sulfoxide in proteins to methionine. This Methanococcus maripaludis (strain C7 / ATCC BAA-1331) protein is Peptide methionine sulfoxide reductase MsrA.